A 256-amino-acid chain; its full sequence is DNA repair protein RecO (256 aa).

It belongs to the RecO family.

In terms of biological role, involved in DNA repair and RecF pathway recombination. The sequence is that of DNA repair protein RecO from Thiobacillus denitrificans (strain ATCC 25259 / T1).